The primary structure comprises 2893 residues: Genome polyprotein (2893 aa).

The disordered stretch occupies residues 206-226; sequence VQAKPEMDNPNPGPDGEGEVE. The 167-residue stretch at 1446–1612 folds into the SF3 helicase domain; that stretch reads SKLKTDLMEM…EEKKRGCKHC (167 aa). 1472-1479 contacts ATP; that stretch reads GASGIGKS. Positions 2119–2345 constitute a Peptidase C3 domain; it reads GSTQQVDAAV…VAEPLVHEMF (227 aa). Residues His2170, Asn2227, and Cys2307 each act as for 3C-like protease activity in the active site. The RdRp catalytic domain occupies 2633-2763; the sequence is THIVTGDYKN…NVSDNMIDKF (131 aa).

In terms of processing, specific enzymatic cleavages in vivo by the viral 3C-like protease yield three mature proteins. 3C-like protease is cleaved autocatalytically.

It is found in the virion. It carries out the reaction RNA(n) + a ribonucleoside 5'-triphosphate = RNA(n+1) + diphosphate. The catalysed reaction is ATP + H2O = ADP + phosphate + H(+). With respect to regulation, inhibited by Rupintrivir. In terms of biological role, capsid protein that assembles with the capsid proteins VP1 and VP3 to form a pseudo-T3 icosahedral capsid of about 40 nm. Its function is as follows. Capsid protein that assembles with the capsid proteins VP1 and VP2 to form a pseudo T3 icosahedral capsid of about 40 nm. Capsid protein that assembles with the capsid proteins VP2 and VP3 to form a pseudo T3 icosahedral capsid of about 40 nm. Functionally, displays RNA helix destabilizing and strand annealing acceleration activity. This activity is necessary at several points during genome replication, for example to separate duplexes that form after genome replication. In terms of biological role, cysteine protease that generates mature viral proteins from the precursor polyprotein. Its function is as follows. Replicates genomic and antigenomic RNA. The protein is Genome polyprotein of Deformed wing virus (DWV).